The chain runs to 298 residues: Protoheme IX farnesyltransferase (298 aa).

Helical transmembrane passes span 26–46 (VVGH…PGVP), 52–72 (FWAS…NHFL), 98–118 (VVGF…AFVN), 120–140 (LTAF…TVYL), 148–168 (IVIG…AVTG), 174–194 (ALLL…AYAI), 214–234 (IAFT…AGLM), 241–261 (SGEI…YYAI), and 278–298 (YSLV…YIVL).

The protein belongs to the UbiA prenyltransferase family. Protoheme IX farnesyltransferase subfamily.

It localises to the cell inner membrane. It carries out the reaction heme b + (2E,6E)-farnesyl diphosphate + H2O = Fe(II)-heme o + diphosphate. The protein operates within porphyrin-containing compound metabolism; heme O biosynthesis; heme O from protoheme: step 1/1. Its function is as follows. Converts heme B (protoheme IX) to heme O by substitution of the vinyl group on carbon 2 of heme B porphyrin ring with a hydroxyethyl farnesyl side group. The sequence is that of Protoheme IX farnesyltransferase from Methylococcus capsulatus (strain ATCC 33009 / NCIMB 11132 / Bath).